The chain runs to 371 residues: Transposase for insertion sequence element IS421 (371 aa).

Belongs to the transposase 11 family.

In terms of biological role, involved in the transposition of the insertion sequence IS421. The sequence is that of Transposase for insertion sequence element IS421 from Escherichia coli.